The primary structure comprises 246 residues: MTDIPADDPKIELRSDITVELVKSAATDSDVLFAARVSTAGEQSLDELKKDPERSKGLINYLMRDRHGSPFEHNSMTFFVSAPIFVFREFMRHRVGWSYNEESGRYRELQPVFYAPDASRKLVQQGRPGKYVFVEGTPEQHELVGSAMEDSYRQAYATYQQMLAAGVAREVARAVLPVGLYSSMYATCNARSLMHFLGLRTQHELAKVPSFPQREIEMAGEKMEAEWARLMPLTHAAFNANGRVAP.

The region spanning 17-241 (ITVELVKSAA…PLTHAAFNAN (225 aa)) is the ThyX domain. FAD contacts are provided by residues S69, 92-94 (RHR), and E101. DUMP is bound by residues 89 to 92 (EFMR), 101 to 105 (EESGR), and R173. Residues 92–103 (RHRVGWSYNEES) carry the ThyX motif motif. Residues 189-191 (NAR) and H195 each bind FAD. R200 serves as a coordination point for dUMP. The Involved in ionization of N3 of dUMP, leading to its activation role is filled by R200.

Belongs to the thymidylate synthase ThyX family. Homotetramer. FAD serves as cofactor.

It carries out the reaction dUMP + (6R)-5,10-methylene-5,6,7,8-tetrahydrofolate + NADPH + H(+) = dTMP + (6S)-5,6,7,8-tetrahydrofolate + NADP(+). Its pathway is pyrimidine metabolism; dTTP biosynthesis. Its function is as follows. Catalyzes the reductive methylation of 2'-deoxyuridine-5'-monophosphate (dUMP) to 2'-deoxythymidine-5'-monophosphate (dTMP) while utilizing 5,10-methylenetetrahydrofolate (mTHF) as the methyl donor, and NADPH and FADH(2) as the reductant. The sequence is that of Flavin-dependent thymidylate synthase from Streptomyces coelicolor (strain ATCC BAA-471 / A3(2) / M145).